Reading from the N-terminus, the 81-residue chain is Exodeoxyribonuclease 7 small subunit (81 aa).

This sequence belongs to the XseB family. Heterooligomer composed of large and small subunits.

It is found in the cytoplasm. The catalysed reaction is Exonucleolytic cleavage in either 5'- to 3'- or 3'- to 5'-direction to yield nucleoside 5'-phosphates.. Bidirectionally degrades single-stranded DNA into large acid-insoluble oligonucleotides, which are then degraded further into small acid-soluble oligonucleotides. The sequence is that of Exodeoxyribonuclease 7 small subunit from Nitratidesulfovibrio vulgaris (strain ATCC 29579 / DSM 644 / CCUG 34227 / NCIMB 8303 / VKM B-1760 / Hildenborough) (Desulfovibrio vulgaris).